A 137-amino-acid chain; its full sequence is Probable 4-amino-4-deoxy-L-arabinose-phosphoundecaprenol flippase subunit ArnF (137 aa).

3 consecutive transmembrane segments (helical) span residues 43-63, 74-94, and 98-118; these read AIAV…FWLL, YSLL…LPFF, and FTVS…TINL.

This sequence belongs to the ArnF family. In terms of assembly, heterodimer of ArnE and ArnF.

Its subcellular location is the cell inner membrane. It functions in the pathway bacterial outer membrane biogenesis; lipopolysaccharide biosynthesis. Its function is as follows. Translocates 4-amino-4-deoxy-L-arabinose-phosphoundecaprenol (alpha-L-Ara4N-phosphoundecaprenol) from the cytoplasmic to the periplasmic side of the inner membrane. This Pseudomonas savastanoi pv. phaseolicola (strain 1448A / Race 6) (Pseudomonas syringae pv. phaseolicola (strain 1448A / Race 6)) protein is Probable 4-amino-4-deoxy-L-arabinose-phosphoundecaprenol flippase subunit ArnF.